Reading from the N-terminus, the 419-residue chain is UDP-N-acetylglucosamine 1-carboxyvinyltransferase (419 aa).

Residue 22–23 participates in phosphoenolpyruvate binding; it reads KN. UDP-N-acetyl-alpha-D-glucosamine is bound at residue arginine 91. Residue cysteine 115 is the Proton donor of the active site. Cysteine 115 is subject to 2-(S-cysteinyl)pyruvic acid O-phosphothioketal. UDP-N-acetyl-alpha-D-glucosamine-binding positions include 120 to 124, 160 to 163, aspartate 305, and valine 327; these read RPVDL and KVSV.

It belongs to the EPSP synthase family. MurA subfamily.

It localises to the cytoplasm. The catalysed reaction is phosphoenolpyruvate + UDP-N-acetyl-alpha-D-glucosamine = UDP-N-acetyl-3-O-(1-carboxyvinyl)-alpha-D-glucosamine + phosphate. Its pathway is cell wall biogenesis; peptidoglycan biosynthesis. Functionally, cell wall formation. Adds enolpyruvyl to UDP-N-acetylglucosamine. The polypeptide is UDP-N-acetylglucosamine 1-carboxyvinyltransferase (Salmonella arizonae (strain ATCC BAA-731 / CDC346-86 / RSK2980)).